Consider the following 167-residue polypeptide: Small ribosomal subunit protein uS5 (167 aa).

The 64-residue stretch at 12–75 (LQEKLIAVNR…EKARRNIVTV (64 aa)) folds into the S5 DRBM domain.

It belongs to the universal ribosomal protein uS5 family. Part of the 30S ribosomal subunit. Contacts proteins S4 and S8.

In terms of biological role, with S4 and S12 plays an important role in translational accuracy. Located at the back of the 30S subunit body where it stabilizes the conformation of the head with respect to the body. The protein is Small ribosomal subunit protein uS5 of Shewanella baltica (strain OS223).